Here is a 460-residue protein sequence, read N- to C-terminus: Lipase member H-A (460 aa).

An N-terminal signal peptide occupies residues 1–26 (MLLSFYFNGLLLVGCLLSWGRSDTEG). Residues Asn-67 and Asn-75 are each glycosylated (N-linked (GlcNAc...) asparagine). Ser-163 serves as the catalytic Nucleophile. An N-linked (GlcNAc...) asparagine glycan is attached at Asn-177. Asp-187 (charge relay system) is an active-site residue. An intrachain disulfide couples Cys-242 to Cys-255. The active-site Charge relay system is His-257. 2 disulfide bridges follow: Cys-279–Cys-290 and Cys-293–Cys-301. N-linked (GlcNAc...) asparagine glycosylation is present at Asn-289. An N-linked (GlcNAc...) asparagine glycan is attached at Asn-366. An intrachain disulfide couples Cys-436 to Cys-455.

It belongs to the AB hydrolase superfamily. Lipase family.

It is found in the secreted. The protein resides in the cell membrane. It carries out the reaction 1-hexadecanoyl-2-(9Z-octadecenoyl)-sn-glycero-3-phosphate + H2O = 2-(9Z-octadecenoyl)-sn-glycero-3-phosphate + hexadecanoate + H(+). Hydrolyzes specifically phosphatidic acid (PA) to produce 2-acyl lysophosphatidic acid (LPA; a potent bioactive lipid mediator) and fatty acid. Does not hydrolyze other phospholipids, like phosphatidylserine (PS), phosphatidylcholine (PC) and phosphatidylethanolamine (PE) or triacylglycerol (TG). The chain is Lipase member H-A (liph-a) from Xenopus laevis (African clawed frog).